The chain runs to 263 residues: Tryptophan synthase alpha chain (263 aa).

Active-site proton acceptor residues include E47 and D58.

It belongs to the TrpA family. In terms of assembly, tetramer of two alpha and two beta chains.

The protein resides in the plastid. The protein localises to the chloroplast. The enzyme catalyses (1S,2R)-1-C-(indol-3-yl)glycerol 3-phosphate + L-serine = D-glyceraldehyde 3-phosphate + L-tryptophan + H2O. The protein operates within amino-acid biosynthesis; L-tryptophan biosynthesis; L-tryptophan from chorismate: step 5/5. The alpha subunit is responsible for the aldol cleavage of indoleglycerol phosphate to indole and glyceraldehyde 3-phosphate. The sequence is that of Tryptophan synthase alpha chain from Pyropia yezoensis (Susabi-nori).